A 364-amino-acid polypeptide reads, in one-letter code: Peptidoglycan transport system permease protein YejB (364 aa).

The next 6 membrane-spanning stretches (helical) occupy residues 9 to 29 (LALM…VIQF), 134 to 154 (SASL…PLGI), 171 to 191 (IIII…IVLF), 219 to 239 (IIDY…SAFA), 283 to 303 (IVIA…SLLI), and 325 to 345 (YPIV…VGLL). The 220-residue stretch at 131-350 (LPVSASLGFW…VVGLLSDLIY (220 aa)) folds into the ABC transmembrane type-1 domain.

This sequence belongs to the binding-protein-dependent transport system permease family. In terms of assembly, the complex is composed of one ATP-binding protein (YejF), two transmembrane proteins (YejB and YejE) and a solute-binding protein (YepA or YejA).

Its subcellular location is the cell inner membrane. Its function is as follows. Part of the ABC transporter complex YejBEF-YepA involved in the uptake of muropeptides, the breakdown products of cell wall peptidoglycan. The import of muropeptides into the cell enables peptidoglycan recycling, which is vital for cell wall integrity in this bacterium. Is also probably part of the ABC transporter complex YejABEF, which is likely involved in broad-spectrum peptide import. Responsible for the translocation of the substrate across the membrane. The sequence is that of Peptidoglycan transport system permease protein YejB from Agrobacterium fabrum (strain C58 / ATCC 33970) (Agrobacterium tumefaciens (strain C58)).